Here is a 250-residue protein sequence, read N- to C-terminus: Virulence plasmid protein pGP6-D-related protein (250 aa).

Belongs to the UPF0137 (pGP6-D) family.

The sequence is that of Virulence plasmid protein pGP6-D-related protein from Chlamydia pneumoniae (Chlamydophila pneumoniae).